A 437-amino-acid chain; its full sequence is MPIANATTVHSDIDHGTKALYSKITWRLIPFLCFCYLAAYLDRINVGFAKLQMLEDLQFSTAAYGLGAGLFFVGYIIFEVPSNLILQRVGAKLWIARIMITWGLLSACTMFVTSTTQFYILRFLLGAAEAGFLPGVLYYLTMWYPTYRRGRIIALFMIGLPLSSVIGGPISGWIMGHFDQVQGLHGWQWLFLLEAIPSVLLGILTFWALPNHFQQAKWLSADDKAQLAADLAADDAEGKDSKHSFRDGFFNLKVWMLGGIDFSILLSAYAMGFWMPTFIRDAGVSDTFHIGLLTAIPSLAALAGMLMIGASSDRHRERRWHIIVPFIIGAIAMASSTLFSQNLVMTVVLFAIASAAIIGAVPVFFSLPATFLKGTAAATGFALACSVANIAGLVSNSLMGVVTDLTGTSHAALWVFAGCLILSCFLVIALPAKLVNR.

Transmembrane regions (helical) follow at residues 28-48 (LIPF…NVGF), 66-86 (LGAG…NLIL), 93-113 (LWIA…MFVT), 123-143 (FLLG…LTMW), 152-172 (IIAL…PISG), 189-209 (WLFL…FWAL), 254-274 (VWML…MGFW), 290-310 (IGLL…MIGA), 320-340 (WHII…TLFS), 347-367 (VVLF…FFSL), 374-394 (GTAA…AGLV), and 411-431 (AALW…IALP).

The protein belongs to the major facilitator superfamily.

The protein localises to the membrane. Its function is as follows. Probable transporter, possibly involved in the aerobic nicotinate degradation pathway. The protein is Putative metabolite transport protein NicT (nicT) of Pseudomonas putida (strain ATCC 47054 / DSM 6125 / CFBP 8728 / NCIMB 11950 / KT2440).